A 331-amino-acid polypeptide reads, in one-letter code: Probable cytosolic iron-sulfur protein assembly protein Ciao1 (331 aa).

7 WD repeats span residues G12–K51, G57–E96, G97–C136, A142–D181, S188–G227, L246–A285, and A297–E331.

Belongs to the WD repeat CIA1 family.

In terms of biological role, essential component of the cytosolic iron-sulfur (Fe/S) protein assembly machinery. Required for the maturation of extramitochondrial Fe/S proteins. The polypeptide is Probable cytosolic iron-sulfur protein assembly protein Ciao1 (Drosophila mojavensis (Fruit fly)).